We begin with the raw amino-acid sequence, 306 residues long: uncharacterized protein (306 aa).

The disordered stretch occupies residues 287 to 306 (DEEGKSEDAKRQEEEKKKSS).

Belongs to the aldo/keto reductase family.

Its subcellular location is the cytoplasm. It localises to the nucleus. This is an uncharacterized protein from Schizosaccharomyces pombe (strain 972 / ATCC 24843) (Fission yeast).